A 159-amino-acid chain; its full sequence is Nucleotide-binding protein PST_3153 (159 aa).

It belongs to the YajQ family.

Nucleotide-binding protein. The chain is Nucleotide-binding protein PST_3153 from Stutzerimonas stutzeri (strain A1501) (Pseudomonas stutzeri).